The chain runs to 378 residues: Glutamate 5-kinase (378 aa).

Lysine 21 is a binding site for ATP. Substrate contacts are provided by serine 61, aspartate 148, and asparagine 160. 180–181 contributes to the ATP binding site; that stretch reads TD. The region spanning 286-364 is the PUA domain; the sequence is RGTLVLDAGA…RRIEELLGYM (79 aa).

The protein belongs to the glutamate 5-kinase family.

The protein localises to the cytoplasm. The catalysed reaction is L-glutamate + ATP = L-glutamyl 5-phosphate + ADP. Its pathway is amino-acid biosynthesis; L-proline biosynthesis; L-glutamate 5-semialdehyde from L-glutamate: step 1/2. In terms of biological role, catalyzes the transfer of a phosphate group to glutamate to form L-glutamate 5-phosphate. The polypeptide is Glutamate 5-kinase (Chromohalobacter salexigens (strain ATCC BAA-138 / DSM 3043 / CIP 106854 / NCIMB 13768 / 1H11)).